A 312-amino-acid polypeptide reads, in one-letter code: Taste receptor type 2 member 9 (312 aa).

At 1–9 (MPSAIEAIY) the chain is on the extracellular side. The chain crosses the membrane as a helical span at residues 10–32 (IILIAGELTIGIWGNGFIVLVNC). At 33–52 (IDWLKRRDISLIDIILISLA) the chain is on the cytoplasmic side. Residues 53 to 72 (ISRICLLCVISLDGFFMLLF) traverse the membrane as a helical segment. Residues 73-86 (PGTYGNSVLVSIVN) lie on the Extracellular side of the membrane. The helical transmembrane segment at 87-109 (VVWTFANNSSLWFTSCLSIFYLL) threads the bilayer. The Cytoplasmic segment spans residues 110–128 (KIANISHPFFFWLKLKINK). Residues 129 to 146 (VMLAILLGSFLISLIISV) form a helical membrane-spanning segment. The Extracellular segment spans residues 147–180 (PKNDDMWYHLFKVSHEENITWKFKVSKIPGTFKQ). A glycan (N-linked (GlcNAc...) asparagine) is linked at asparagine 164. Residues 181 to 203 (LTLNLGVMVPFILCLISFFLLLF) traverse the membrane as a helical segment. The Cytoplasmic portion of the chain corresponds to 204-234 (SLVRHTKQIRLHATGFRDPSTEAHMRAIKAV). The helical transmembrane segment at 235 to 257 (IIFLLLLIVYYPVFLVMTSSALI) threads the bilayer. At 258–261 (PQGK) the chain is on the extracellular side. A helical transmembrane segment spans residues 262 to 284 (LVLMIGDIVTVIFPSSHSFILIM). Over 285–312 (GNSKLREAFLKMLRFVKCFLRRRKPFVP) the chain is Cytoplasmic.

This sequence belongs to the G-protein coupled receptor T2R family. In terms of tissue distribution, expressed in subsets of taste receptor cells of the tongue and palate epithelium and exclusively in gustducin-positive cells.

The protein localises to the membrane. Its function is as follows. Gustducin-coupled receptor implicated in the perception of bitter compounds in the oral cavity and the gastrointestinal tract. Signals through PLCB2 and the calcium-regulated cation channel TRPM5. The polypeptide is Taste receptor type 2 member 9 (TAS2R9) (Homo sapiens (Human)).